Consider the following 156-residue polypeptide: Small ribosomal subunit protein uS7 (156 aa).

Belongs to the universal ribosomal protein uS7 family. In terms of assembly, part of the 30S ribosomal subunit. Contacts proteins S9 and S11.

Its function is as follows. One of the primary rRNA binding proteins, it binds directly to 16S rRNA where it nucleates assembly of the head domain of the 30S subunit. Is located at the subunit interface close to the decoding center, probably blocks exit of the E-site tRNA. This is Small ribosomal subunit protein uS7 from Streptococcus equi subsp. equi (strain 4047).